Here is a 149-residue protein sequence, read N- to C-terminus: NPC intracellular cholesterol transporter 2 (149 aa).

An N-terminal signal peptide occupies residues 1–21 (MRLLVAAFLLLALGDLGPGGA). 3 disulfides stabilise this stretch: Cys27–Cys140, Cys42–Cys47, and Cys93–Cys99. A glycan (N-linked (GlcNAc...) asparagine) is linked at Asn58. N6-acetyllysine is present on Lys116.

Belongs to the NPC2 family. As to quaternary structure, interacts with NPC1 (via the second lumenal domain) in a cholestrol-dependent manner. Interacts with NUS1/NgBR, the interaction stabilizes NCP2 and regulates cholesterol trafficking. Interacts with DHDDS. Interacts with NEDD4L (via C2 domain). Interacts with NPC1L1. In terms of tissue distribution, epididymis. High levels are found in the caput and corpus regions. Weaker levels in the distal cauda and in the efferent ducts.

Its subcellular location is the secreted. The protein localises to the endoplasmic reticulum. It localises to the lysosome. The catalysed reaction is cholesterol(in) = cholesterol(out). In terms of biological role, intracellular cholesterol transporter which acts in concert with NPC1 and plays an important role in the egress of cholesterol from the lysosomal compartment. Unesterified cholesterol that has been released from LDLs in the lumen of the late endosomes/lysosomes is transferred by NPC2 to the cholesterol-binding pocket in the N-terminal domain of NPC1. May bind and mobilize cholesterol that is associated with membranes. NPC2 binds cholesterol with a 1:1 stoichiometry. Can bind a variety of sterols, including lathosterol, desmosterol and the plant sterols stigmasterol and beta-sitosterol. The secreted form of NCP2 regulates biliary cholesterol secretion via stimulation of ABCG5/ABCG8-mediated cholesterol transport. This chain is NPC intracellular cholesterol transporter 2, found in Canis lupus familiaris (Dog).